The chain runs to 164 residues: ATP synthase subunit b (164 aa).

The helical transmembrane segment at 6–26 (GELVGNFILVTGSVIVLLLLI) threads the bilayer.

The protein belongs to the ATPase B chain family. F-type ATPases have 2 components, F(1) - the catalytic core - and F(0) - the membrane proton channel. F(1) has five subunits: alpha(3), beta(3), gamma(1), delta(1), epsilon(1). F(0) has three main subunits: a(1), b(2) and c(10-14). The alpha and beta chains form an alternating ring which encloses part of the gamma chain. F(1) is attached to F(0) by a central stalk formed by the gamma and epsilon chains, while a peripheral stalk is formed by the delta and b chains.

The protein localises to the cell membrane. Functionally, f(1)F(0) ATP synthase produces ATP from ADP in the presence of a proton or sodium gradient. F-type ATPases consist of two structural domains, F(1) containing the extramembraneous catalytic core and F(0) containing the membrane proton channel, linked together by a central stalk and a peripheral stalk. During catalysis, ATP synthesis in the catalytic domain of F(1) is coupled via a rotary mechanism of the central stalk subunits to proton translocation. In terms of biological role, component of the F(0) channel, it forms part of the peripheral stalk, linking F(1) to F(0). The polypeptide is ATP synthase subunit b (Streptococcus pyogenes serotype M12 (strain MGAS2096)).